Reading from the N-terminus, the 377-residue chain is Deoxyribonuclease CdiA-o11 (377 aa).

A VENN CT cleavage motif motif is present at residues 81–84 (VENN). Positions 85-233 (YLSTNQSLTF…ISFMSRNTAT (149 aa)) are inner membrane translocation domain (IMTD), targets to YciB. A CT domain, sufficient to interact with CdiI region spans residues 88–377 (TNQSLTFDKE…GVKVTVTQVK (290 aa)). A has DNase activity in vivo, cannot be expressed in the absence of CdiI region spans residues 222-377 (AAISFMSRNT…GVKVTVTQVK (156 aa)). Catalysis depends on residues Glu-257, Asp-278, Ser-289, and Lys-291. Residues Glu-257 and Asp-278 each contribute to the Zn(2+) site.

In terms of assembly, interacts with cognate immunity protein CdiI-o11-EC869, which blocks its toxic DNase activity. The cofactor is Zn(2+).

The protein localises to the target cell. It is found in the target cell cytoplasm. In terms of biological role, toxic component of a toxin-immunity protein module, which functions as a cellular contact-dependent growth inhibition (CDI) system. CDI modules allow bacteria to communicate with and inhibit the growth of closely related neighboring bacteria in a contact-dependent fashion. The C-terminal 289 residues (the CT fragment) has a strong DNase activity in the presence of Zn(2+), completely degrading supercoiled and linear plasmids, and inhibits growth. In the presence of Mg(2+) it nicks dsDNA. Toxic activity is neutralized by coexpression of the cognate immunity protein CdiI-o11-EC869, but not by non-cognate immunity proteins from other toxin-immunity modules or other strains of E.coli. Gains access to the cytoplasm of target cells by using integral inner membrane protein YciB. Expression of this locus confers protection against other bacteria carrying the locus. This Escherichia coli O157:H7 (strain EC869) protein is Deoxyribonuclease CdiA-o11 (cdiA4).